A 70-amino-acid polypeptide reads, in one-letter code: Protein SlyX homolog (70 aa).

The protein belongs to the SlyX family.

The chain is Protein SlyX homolog from Shewanella sp. (strain MR-7).